The primary structure comprises 343 residues: LRP2-binding protein (343 aa).

A TPR repeat occupies 58–91; that stretch reads SQATFLLGQLHYVQGCYAEAELIFDRIKDKDPQA. Sel1-like repeat units lie at residues 92 to 124, 132 to 167, 172 to 205, 206 to 241, 242 to 273, and 293 to 328; these read LYQLAVIYYDGLGTKEDLGRAVEYMGRVAFWDS, YAALYNLGQAYLEGFGVQASSSEAERLWLLAADNGN, VKAQSALGMFYSRPESLDLRKAFFWHSQACGNGS, LESQAALGLMYLYGHGVQRDSDSALFCLKEAAERGS, VYAQGHLTACYYRRQLYSRAAALGQRVCEYKD, and AIGMFYYARCLHLGRGVPQNRDKAKHYCTQAVRIDP.

Its subcellular location is the cytoplasm. Functionally, may act as an adapter that regulates LRP2 function. The polypeptide is LRP2-binding protein (lrp2bp) (Danio rerio (Zebrafish)).